A 396-amino-acid chain; its full sequence is Protein PIN-LIKES 5 (396 aa).

Residues 1–5 (MGFWS) lie on the Lumenal side of the membrane. The helical transmembrane segment at 6-26 (LLEVASMPVIQVLFMSLVGAF) threads the bilayer. The Cytoplasmic portion of the chain corresponds to 27-45 (MASDRCKLFPVEARNSMNK). The chain crosses the membrane as a helical span at residues 46–66 (VVFVLFAPALMFANLAQTVTL). Over 67-73 (EDIISWW) the chain is Lumenal. The helical transmembrane segment at 74–94 (FMPVNMGLTFLIGGLLGWLVV) threads the bilayer. Topologically, residues 95–106 (KILKPPPYLEGL) are cytoplasmic. Residues 107 to 127 (IVATCSAGNMGNLPIILVPAI) form a helical membrane-spanning segment. The Lumenal segment spans residues 128-144 (CDEDKSPFGNRSVCRTV). A helical transmembrane segment spans residues 145-165 (GLSYASFSMALGGFYIWTYTF). The Cytoplasmic portion of the chain corresponds to 166–229 (RLIKGSAMKV…WRKGVDFLHE (64 aa)). The helical transmembrane segment at 230 to 250 (ILEELLAPPTLGAIIGFIFGA) threads the bilayer. The Lumenal segment spans residues 251-273 (VRWLRNLIIGDDAPLRIVQSTAK). Residues 274-294 (LLGDGTIPCMTIILGGNLIQG) form a helical membrane-spanning segment. Topologically, residues 295–312 (LRSSAVKPMVVLGIVCVR) are cytoplasmic. Residues 313-333 (YIAMPIIGIGIVLTAANLGFL) form a helical membrane-spanning segment. The Lumenal portion of the chain corresponds to 334–337 (PADP). The chain crosses the membrane as a helical span at residues 338–358 (LFQYVLMLQFTLPPAMNIGTM). The Cytoplasmic portion of the chain corresponds to 359 to 370 (TQLYNVAQDECS). A helical transmembrane segment spans residues 371–391 (VLMLWTYLVAILALTVWSTIF). Over 392–396 (LHLLV) the chain is Lumenal.

Belongs to the auxin efflux carrier (TC 2.A.69.2) family. Expressed in seedlings, cauline leaves and flowers.

Its subcellular location is the endoplasmic reticulum membrane. Involved in cellular auxin homeostasis by regulating auxin metabolism. Regulates intracellular auxin accumulation at the endoplasmic reticulum and thus auxin availability for nuclear auxin signaling. This chain is Protein PIN-LIKES 5, found in Arabidopsis thaliana (Mouse-ear cress).